We begin with the raw amino-acid sequence, 357 residues long: Phosphoribosylformylglycinamidine cyclo-ligase (357 aa).

This sequence belongs to the AIR synthase family.

It is found in the cytoplasm. The catalysed reaction is 2-formamido-N(1)-(5-O-phospho-beta-D-ribosyl)acetamidine + ATP = 5-amino-1-(5-phospho-beta-D-ribosyl)imidazole + ADP + phosphate + H(+). The protein operates within purine metabolism; IMP biosynthesis via de novo pathway; 5-amino-1-(5-phospho-D-ribosyl)imidazole from N(2)-formyl-N(1)-(5-phospho-D-ribosyl)glycinamide: step 2/2. This is Phosphoribosylformylglycinamidine cyclo-ligase from Rhizobium leguminosarum bv. trifolii (strain WSM2304).